The following is a 232-amino-acid chain: tRNA1(Val) (adenine(37)-N6)-methyltransferase (232 aa).

It belongs to the methyltransferase superfamily. tRNA (adenine-N(6)-)-methyltransferase family.

Its subcellular location is the cytoplasm. The enzyme catalyses adenosine(37) in tRNA1(Val) + S-adenosyl-L-methionine = N(6)-methyladenosine(37) in tRNA1(Val) + S-adenosyl-L-homocysteine + H(+). Functionally, specifically methylates the adenine in position 37 of tRNA(1)(Val) (anticodon cmo5UAC). The sequence is that of tRNA1(Val) (adenine(37)-N6)-methyltransferase from Pseudoalteromonas translucida (strain TAC 125).